The chain runs to 351 residues: 3-ketosteroid-9-alpha-monooxygenase, ferredoxin reductase component (351 aa).

An FAD-binding FR-type domain is found at 10-116; that stretch reads SRSVILTVSA…LPPAGVFTPK (107 aa). Positions 264 to 351 constitute a 2Fe-2S ferredoxin-type domain; the sequence is ATVEVELDGE…PVTDHLKIEF (88 aa). Positions 300, 305, 308, and 338 each coordinate [2Fe-2S] cluster.

In terms of assembly, the two-component system 3-ketosteroid-9-alpha-monooxygenase is composed of an oxygenase component KshA and a reductase component KshB. Requires FAD as cofactor. [2Fe-2S] cluster serves as cofactor.

It carries out the reaction androsta-1,4-diene-3,17-dione + 2 reduced [2Fe-2S]-[ferredoxin] + O2 + 2 H(+) = 9alpha-hydroxyandrosta-1,4-diene-3,17-dione + 2 oxidized [2Fe-2S]-[ferredoxin] + H2O. It participates in steroid metabolism; cholesterol degradation. With respect to regulation, KSH activity is completely inhibited by zinc ions. KshB is specifically inhibited by Cu(2+) ions. Probably involved in the degradation of cholesterol. In vitro, catalyzes the introduction of a 9alpha-hydroxyl moiety into the ring B of 3-ketosteroid substrates such as 1,4-androstadiene-3,17-dione (ADD), 4-androstene-3,17-dione (AD), 4-androstene-17beta-ol-3-one (testosterone), 4-pregnene-3,20-dione (progesterone), 19-nor-4-androstene-3,17-dione (nordion), 1-(5alpha)-androstene-3,17-dione, 5alpha-androstane-3,17-dione and 5beta-androstane-3,17-dione. KSH has the highest activity with 3-keto-Delta4 steroid substrates. This chain is 3-ketosteroid-9-alpha-monooxygenase, ferredoxin reductase component, found in Rhodococcus rhodochrous.